A 177-amino-acid chain; its full sequence is N-acetylmuramoyl-L-alanine amidase A (177 aa).

The N-acetylmuramoyl-L-alanine amidase domain maps to glutamine 23–glycine 158. Cysteine 114 and cysteine 121 are disulfide-bonded.

The protein localises to the secreted. It catalyses the reaction Hydrolyzes the link between N-acetylmuramoyl residues and L-amino acid residues in certain cell-wall glycopeptides.. Functionally, antibacterial activity against Gram-positive bacteria M.luteus, S.aureus, E.faecalis and P.acidilactici and Gram-negative bacterium E.coli. This Achromobacter lyticus protein is N-acetylmuramoyl-L-alanine amidase A (cwhA).